Reading from the N-terminus, the 316-residue chain is Cuticle collagen 7 (316 aa).

Residues 1-34 (MSSATFLSVMAGLSGIVVFGALISVFHIYSDINS) form the signal peptide. Disordered stretches follow at residues 78 to 269 (KQSQ…DAAY) and 281 to 316 (HRNVNRHRAAASKKRVVAKKRVAKKRVVAARRHVQA). Polar residues predominate over residues 79-90 (QSQCNCGQQASN). 3 triple-helical region regions span residues 94–126 (GPPGPPGASGDKGHDGQPGQAGKPGQPGVAGPS), 139–198 (GLPG…PGKS), and 204–263 (GLPG…DGTP). Composition is skewed to low complexity over residues 110–125 (QPGQAGKPGQPGVAGP), 137–147 (PQGLPGPAGVP), and 177–198 (AGSAGSPGQAGAPGNPGSPGKS). Over residues 209–221 (SGAPGPQGPPGAP) the composition is skewed to pro residues. The segment covering 241-260 (PNGQPGHPGQDGQPGAPGND) has biased composition (low complexity).

It belongs to the cuticular collagen family. As to quaternary structure, collagen polypeptide chains are complexed within the cuticle by disulfide bonds and other types of covalent cross-links.

Functionally, nematode cuticles are composed largely of collagen-like proteins. The cuticle functions both as an exoskeleton and as a barrier to protect the worm from its environment. The sequence is that of Cuticle collagen 7 (col-7) from Caenorhabditis elegans.